A 205-amino-acid polypeptide reads, in one-letter code: dITP/XTP pyrophosphatase (205 aa).

Position 10 to 15 (10 to 15) interacts with substrate; that stretch reads TKNEGK. The Mg(2+) site is built by E44 and D73. D73 (proton acceptor) is an active-site residue. Substrate contacts are provided by residues S74, 156-159, K179, and 184-185; these read FGYD and HR.

The protein belongs to the HAM1 NTPase family. Homodimer. Mg(2+) is required as a cofactor.

It carries out the reaction XTP + H2O = XMP + diphosphate + H(+). The enzyme catalyses dITP + H2O = dIMP + diphosphate + H(+). It catalyses the reaction ITP + H2O = IMP + diphosphate + H(+). Pyrophosphatase that catalyzes the hydrolysis of nucleoside triphosphates to their monophosphate derivatives, with a high preference for the non-canonical purine nucleotides XTP (xanthosine triphosphate), dITP (deoxyinosine triphosphate) and ITP. Seems to function as a house-cleaning enzyme that removes non-canonical purine nucleotides from the nucleotide pool, thus preventing their incorporation into DNA/RNA and avoiding chromosomal lesions. This Dictyoglomus thermophilum (strain ATCC 35947 / DSM 3960 / H-6-12) protein is dITP/XTP pyrophosphatase.